Consider the following 614-residue polypeptide: Zinc metalloproteinase dpy-31 (614 aa).

A signal peptide spans 1–24 (MSLLRCTTLLLVVVAIALPPCILG). Positions 25–150 (YSLHDGSRLD…KTGQRRVKRK (126 aa)) are excised as a propeptide. In terms of domain architecture, Peptidase M12A spans 150 to 349 (KFIGSDLRRW…IRLMNKIYCS (200 aa)). A glycan (N-linked (GlcNAc...) asparagine) is linked at N190. Disulfide bonds link C193–C348, C216–C237, C352–C372, C374–C383, and C394–C422. H245 is a binding site for Zn(2+). The active site involves E246. Zn(2+) is bound by residues H249 and H255. The EGF-like domain occupies 344 to 384 (NKIYCSNVCSRKLPCQRGGYTDPRRCDRCRCPDGFTGQFCE). Residues 394-510 (CGGRIQVNGG…RGFEARARAL (117 aa)) form the CUB domain. N-linked (GlcNAc...) asparagine glycosylation is present at N461. Residues 513–562 (NGQWASWSPWTPCTASCGACGSRMRTRVCSHGACAGEPVENQVCNTHPCN) form the TSP type-1 domain. 3 cysteine pairs are disulfide-bonded: C525-C556, C529-C561, and C541-C546.

The cofactor is Zn(2+).

The protein resides in the secreted. Inhibited by marimastat and tripeptide hydroxamic acids. Inhibited by 1,10-phenanthroline. Metalloprotease which cleaves the carboxyl terminus of procollagens to mature collagens. Probably involved in cuticular collagen maturation. In Teladorsagia circumcincta (Brown stomach worm), this protein is Zinc metalloproteinase dpy-31.